Consider the following 353-residue polypeptide: Protein RecA (353 aa).

67–74 (GPESSGKT) is an ATP binding site.

The protein belongs to the RecA family.

It is found in the cytoplasm. Functionally, can catalyze the hydrolysis of ATP in the presence of single-stranded DNA, the ATP-dependent uptake of single-stranded DNA by duplex DNA, and the ATP-dependent hybridization of homologous single-stranded DNAs. It interacts with LexA causing its activation and leading to its autocatalytic cleavage. This chain is Protein RecA, found in Shewanella sediminis (strain HAW-EB3).